The sequence spans 706 residues: MDKSFTLNRLDNGIAVLTMDVPGETMNTLRAEFGPEICEMLAEIKADAGIRGVVIISGKKDSFVAGADISMLDACATAEDARELSKQGHEVFFALESLSIPVVAAINGACLGGGLELALACHQRVCTDSNKTMLGLPEVQLGLLPGGGGTQRLPRLVGIAKSLDMMLTGKQLRAKQALKMGLVDDVVPESILLQTAIEMALAGARPAKKPKLSTVEKLLEGTPVGRNIIFEQALKQVNKKTQGNYPAPEKIIDCVRQGVTKGIVKGLEVEAQHFGDLVVSNESEALRSIFFATTEMKKESGAGDVSPKAVNKVMVLGGGLMGGGIASVTTTKAKIPVRVKDISEIGLSNALAYAYKLLAKGVKRRHMTPAVRDNLMALMTTTTEYKGIKDADMVVEAVFEDLNLKHQMVKDVERECGEHTIFASNTSSLPIKQIAEAAERPENVIGLHYFSPVEKMPLVEVIAHDKTSPQTIATTVAFARKQGKTPIVVKDGAGFYVNRILALYMNEAANLLLEGQSVDHLDKALVKFGFPVGPMTLLDEVGIDVGAKISPILEKELGERFKAPAAFDKLLADDRKGRKNGKGFYQYGAKSKKKLVDESVYGVLGLTPGADGEPIALAERCVVQMLNEAVRCLEEGIIASPRDGDIGAIFGIGFPPFLGGPFRYMDSLGAKHLVETLKRYQDQFGDRFAPCDRLVEMAESGSKFYE.

The interval 1–188 (MDKSFTLNRL…KMGLVDDVVP (188 aa)) is enoyl-CoA hydratase. The segment at 308–706 (KAVNKVMVLG…MAESGSKFYE (399 aa)) is 3-hydroxyacyl-CoA dehydrogenase.

The protein in the N-terminal section; belongs to the enoyl-CoA hydratase/isomerase family. In the central section; belongs to the 3-hydroxyacyl-CoA dehydrogenase family. Heterotetramer of two alpha chains (FadJ) and two beta chains (FadI).

Its subcellular location is the cytoplasm. It carries out the reaction a (3S)-3-hydroxyacyl-CoA = a (2E)-enoyl-CoA + H2O. The catalysed reaction is a 4-saturated-(3S)-3-hydroxyacyl-CoA = a (3E)-enoyl-CoA + H2O. It catalyses the reaction a (3S)-3-hydroxyacyl-CoA + NAD(+) = a 3-oxoacyl-CoA + NADH + H(+). The enzyme catalyses (3S)-3-hydroxybutanoyl-CoA = (3R)-3-hydroxybutanoyl-CoA. The protein operates within lipid metabolism; fatty acid beta-oxidation. Functionally, catalyzes the formation of a hydroxyacyl-CoA by addition of water on enoyl-CoA. Also exhibits 3-hydroxyacyl-CoA epimerase and 3-hydroxyacyl-CoA dehydrogenase activities. The protein is Fatty acid oxidation complex subunit alpha of Shewanella loihica (strain ATCC BAA-1088 / PV-4).